A 413-amino-acid polypeptide reads, in one-letter code: Gamma-DL-glutamyl hydrolase (413 aa).

The N-terminal stretch at 1 to 32 is a signal peptide; sequence MNTLANWKKFLLVAVIICFLVPIMTKAEIAEA. 3 consecutive NlpC/P60 domains span residues 33 to 159, 163 to 287, and 291 to 413; these read DTSS…RRIA, ATAD…RRFD, and IPKE…IRVQ. Residue Cys194 is the Nucleophile of the active site. The active-site Proton acceptor is the His247. Gln259 is an active-site residue.

This sequence belongs to the peptidase C40 family.

The protein localises to the secreted. It localises to the cell wall. Inhibited by pretreatment with 1 mM 4-(hydroxymercuri)benzoate, a sulfhydryl inhibitor. Functionally, cleaves, in an endo-type manner, the gamma-glutamyl bond between D-glutamate and L-glutamate of poly-gamma-glutamate (PGA). In Bacillus subtilis (strain 168), this protein is Gamma-DL-glutamyl hydrolase (pgdS).